The sequence spans 69 residues: Pleurain-A2 (69 aa).

The first 22 residues, 1-22 (MFTLKKTLLLLYFLGTISISLC), serve as a signal peptide directing secretion. Positions 23–43 (KQERDADEDDGRKMTEEEVKR) are excised as a propeptide. Cysteine 63 and cysteine 69 are disulfide-bonded.

As to expression, expressed by the skin glands.

Its subcellular location is the secreted. Its function is as follows. Antimicrobial peptide. Has activity against the Gram-positive bacterium S.aureus ATCC2592 (MIC=15 ug/ml), the Gram-negative bacteria E.coli ATCC25922 (MIC=60 ug/ml), B.dysenteriae (MIC=60 ug/ml), H.pylori NTCT11637 (MIC=30 ug/ml), and the fungus C.albicans ATCC2002 (MIC=30 ug/ml). Has little hemolytic activity on rabbit red blood cells. The protein is Pleurain-A2 of Nidirana pleuraden (Yunnan pond frog).